The chain runs to 227 residues: UPF0758 protein lpp2553 (227 aa).

An MPN domain is found at 102 to 225 (RLSNTQQTYA…YSIFAENKWV (124 aa)). His-173, His-175, and Asp-186 together coordinate Zn(2+). Positions 173–186 (HNHPSGLSDASQQD) match the JAMM motif motif.

Belongs to the UPF0758 family.

This is UPF0758 protein lpp2553 from Legionella pneumophila (strain Paris).